Consider the following 1004-residue polypeptide: MAKQEQAPDRANDVFALTSFLYGGNADYIEELYAKYEDDPNSVDPQWRDFFAKLGDNADDVKKNAEGPSWTRKNWPIAANGELVSALDGNWAEVEKHVADKLKGKAAKGEAKGAAGTPLTAEEITQAARDSVRAIMMIRAYRMRGHLHANLDPLGLAEKPNDYNELEPENYGFTPADYNRKIFIDNVLGLEYATVPEMLDILKRTYCGAIGVEFMHISDPAEKAWIQERIEGPDKKVAFTPEGKKAILSKLIEAEGFEQFIDVKYKGTKRFGLDGGESLIPALEQIVKRGGQMGLKEVVLGMAHRGRLNVLSQVMGKPHRAIFHEFKGGSYTPDDVEGSGDVKYHLGASSDREFDGNKVHLSLTANPSHLEIVNPVVMGKARAKQDLLVGRTRDDMVPLSERAKVLPLLLHGDAAFAGQGVVAECLGLSGLKGHRVAGTLHFIINNQIGFTTNPAFSRSSPYPSDVAKMIEAPIFHVNGDDPEAVVFAAKVATEFRMTFHKPVVIDMFCYRRFGHNEGDEPSFTQPLMYKAIRAHKTTVQLYGEKLIAEGLVTQDDIDRMKADWRQKLEGEFEAGQSYKPNKADWLDGAWAGLRTADNADEQRRGKTAVPVKTLKEIGKKLVEVPKDFHVHRTIQRFLDNRAKMMETGEGIDWATAESLAFGSLAVEGHPIRLSGQDVERGTFSQRHTVLYDQENQNRYIPLNNLQKGQAIYEAINSMLSEEAVLGYEYGYSLSDPRALVLWEAQFGDFANGAQVVFDQFISSGERKWLRMSGLVCLLPHGFEGQGPEHSSARLERYLQLCAEDNMQVANVTTPANYFHILRRQMKRDFRKPLIMMTPKSLLRHKRAISTLAELSGESSFHRLLWDDAQYNKDEGIKLQKDAKIRRVVLCSGKVYYDLYEEREKRGIDDVYLLRVEQLYPFPAKALINELSRFRHAEMVWCQEEPKNMGAWSFIDPYLEWVLAHIDAKHQRVRYAGRPAAASPATGLMSKHLAQLAAFLEDALG.

This sequence belongs to the alpha-ketoglutarate dehydrogenase family. In terms of assembly, homodimer. Part of the 2-oxoglutarate dehydrogenase (OGDH) complex composed of E1 (2-oxoglutarate dehydrogenase), E2 (dihydrolipoamide succinyltransferase) and E3 (dihydrolipoamide dehydrogenase); the complex contains multiple copies of the three enzymatic components (E1, E2 and E3). Thiamine diphosphate is required as a cofactor.

It catalyses the reaction N(6)-[(R)-lipoyl]-L-lysyl-[protein] + 2-oxoglutarate + H(+) = N(6)-[(R)-S(8)-succinyldihydrolipoyl]-L-lysyl-[protein] + CO2. Its function is as follows. E1 component of the 2-oxoglutarate dehydrogenase (OGDH) complex which catalyzes the decarboxylation of 2-oxoglutarate, the first step in the conversion of 2-oxoglutarate to succinyl-CoA and CO(2). This is 2-oxoglutarate dehydrogenase E1 component from Brucella canis (strain ATCC 23365 / NCTC 10854 / RM-666).